A 464-amino-acid polypeptide reads, in one-letter code: ATP-dependent protease ATPase subunit HslU (464 aa).

Residues valine 19, 61–66 (GVGKTE), aspartate 278, glutamate 342, and arginine 414 contribute to the ATP site.

It belongs to the ClpX chaperone family. HslU subfamily. In terms of assembly, a double ring-shaped homohexamer of HslV is capped on each side by a ring-shaped HslU homohexamer. The assembly of the HslU/HslV complex is dependent on binding of ATP.

It is found in the cytoplasm. Its function is as follows. ATPase subunit of a proteasome-like degradation complex; this subunit has chaperone activity. The binding of ATP and its subsequent hydrolysis by HslU are essential for unfolding of protein substrates subsequently hydrolyzed by HslV. HslU recognizes the N-terminal part of its protein substrates and unfolds these before they are guided to HslV for hydrolysis. In Halalkalibacterium halodurans (strain ATCC BAA-125 / DSM 18197 / FERM 7344 / JCM 9153 / C-125) (Bacillus halodurans), this protein is ATP-dependent protease ATPase subunit HslU.